The following is a 414-amino-acid chain: uncharacterized protein (414 aa).

Positions Glu-246–Arg-360 constitute a Nop domain. Residues Ile-358 to Lys-414 form a disordered region. The span at Lys-361–Lys-414 shows a compositional bias: basic residues.

It belongs to the NOP5/NOP56 family.

This is an uncharacterized protein from Methanocaldococcus jannaschii (strain ATCC 43067 / DSM 2661 / JAL-1 / JCM 10045 / NBRC 100440) (Methanococcus jannaschii).